We begin with the raw amino-acid sequence, 467 residues long: tRNA(Ile)-lysidine synthase (467 aa).

Residue 26-31 (SGGPDS) coordinates ATP.

It belongs to the tRNA(Ile)-lysidine synthase family.

The protein localises to the cytoplasm. It catalyses the reaction cytidine(34) in tRNA(Ile2) + L-lysine + ATP = lysidine(34) in tRNA(Ile2) + AMP + diphosphate + H(+). In terms of biological role, ligates lysine onto the cytidine present at position 34 of the AUA codon-specific tRNA(Ile) that contains the anticodon CAU, in an ATP-dependent manner. Cytidine is converted to lysidine, thus changing the amino acid specificity of the tRNA from methionine to isoleucine. The sequence is that of tRNA(Ile)-lysidine synthase from Clostridium tetani (strain Massachusetts / E88).